The chain runs to 248 residues: Probable transcriptional regulatory protein Plav_2114 (248 aa).

It belongs to the TACO1 family.

Its subcellular location is the cytoplasm. The protein is Probable transcriptional regulatory protein Plav_2114 of Parvibaculum lavamentivorans (strain DS-1 / DSM 13023 / NCIMB 13966).